Reading from the N-terminus, the 273-residue chain is Diphthine methyl ester synthase (273 aa).

Residues L10, D87, G90, 115 to 116 (SI), L166, V224, and H249 contribute to the S-adenosyl-L-methionine site.

This sequence belongs to the diphthine synthase family.

It catalyses the reaction 2-[(3S)-amino-3-carboxypropyl]-L-histidyl-[translation elongation factor 2] + 4 S-adenosyl-L-methionine = diphthine methyl ester-[translation elongation factor 2] + 4 S-adenosyl-L-homocysteine + 3 H(+). The protein operates within protein modification; peptidyl-diphthamide biosynthesis. S-adenosyl-L-methionine-dependent methyltransferase that catalyzes four methylations of the modified target histidine residue in translation elongation factor 2 (EF-2), to form an intermediate called diphthine methyl ester. The four successive methylation reactions represent the second step of diphthamide biosynthesis. This is Diphthine methyl ester synthase (dph5) from Dictyostelium discoideum (Social amoeba).